Reading from the N-terminus, the 30-residue chain is Rothein 3.3 (30 aa).

Leu-30 is modified (leucine amide).

As to expression, expressed by the skin dorsal glands.

Its subcellular location is the secreted. In terms of biological role, lacks antimicrobial activity. Does not inhibit the formation of NO by neuronal nitric oxide. This Litoria rothii (Roth's tree frog) protein is Rothein 3.3.